Here is a 364-residue protein sequence, read N- to C-terminus: tRNA 2-selenouridine synthase (364 aa).

The 124-residue stretch at 14–137 (LLADTPLIDV…LRQTAIQATW (124 aa)) folds into the Rhodanese domain. The S-selanylcysteine intermediate role is filled by Cys97.

It belongs to the SelU family. Monomer.

The catalysed reaction is 5-methylaminomethyl-2-thiouridine(34) in tRNA + selenophosphate + (2E)-geranyl diphosphate + H2O + H(+) = 5-methylaminomethyl-2-selenouridine(34) in tRNA + (2E)-thiogeraniol + phosphate + diphosphate. It carries out the reaction 5-methylaminomethyl-2-thiouridine(34) in tRNA + (2E)-geranyl diphosphate = 5-methylaminomethyl-S-(2E)-geranyl-thiouridine(34) in tRNA + diphosphate. The enzyme catalyses 5-methylaminomethyl-S-(2E)-geranyl-thiouridine(34) in tRNA + selenophosphate + H(+) = 5-methylaminomethyl-2-(Se-phospho)selenouridine(34) in tRNA + (2E)-thiogeraniol. It catalyses the reaction 5-methylaminomethyl-2-(Se-phospho)selenouridine(34) in tRNA + H2O = 5-methylaminomethyl-2-selenouridine(34) in tRNA + phosphate. In terms of biological role, involved in the post-transcriptional modification of the uridine at the wobble position (U34) of tRNA(Lys), tRNA(Glu) and tRNA(Gln). Catalyzes the conversion of 2-thiouridine (S2U-RNA) to 2-selenouridine (Se2U-RNA). Acts in a two-step process involving geranylation of 2-thiouridine (S2U) to S-geranyl-2-thiouridine (geS2U) and subsequent selenation of the latter derivative to 2-selenouridine (Se2U) in the tRNA chain. The chain is tRNA 2-selenouridine synthase from Salmonella dublin (strain CT_02021853).